Here is a 337-residue protein sequence, read N- to C-terminus: Tetraacyldisaccharide 4'-kinase (337 aa).

ATP is bound at residue 51 to 58; that stretch reads HVGGAGKT.

It belongs to the LpxK family.

It catalyses the reaction a lipid A disaccharide + ATP = a lipid IVA + ADP + H(+). Its pathway is glycolipid biosynthesis; lipid IV(A) biosynthesis; lipid IV(A) from (3R)-3-hydroxytetradecanoyl-[acyl-carrier-protein] and UDP-N-acetyl-alpha-D-glucosamine: step 6/6. Its function is as follows. Transfers the gamma-phosphate of ATP to the 4'-position of a tetraacyldisaccharide 1-phosphate intermediate (termed DS-1-P) to form tetraacyldisaccharide 1,4'-bis-phosphate (lipid IVA). This Afipia carboxidovorans (strain ATCC 49405 / DSM 1227 / KCTC 32145 / OM5) (Oligotropha carboxidovorans) protein is Tetraacyldisaccharide 4'-kinase.